The chain runs to 159 residues: SsrA-binding protein (159 aa).

Positions 134 to 159 are disordered; the sequence is KLHDKRETSKERDWNRQKNRLLKERG. Positions 137–159 are enriched in basic and acidic residues; it reads DKRETSKERDWNRQKNRLLKERG.

It belongs to the SmpB family.

The protein localises to the cytoplasm. Required for rescue of stalled ribosomes mediated by trans-translation. Binds to transfer-messenger RNA (tmRNA), required for stable association of tmRNA with ribosomes. tmRNA and SmpB together mimic tRNA shape, replacing the anticodon stem-loop with SmpB. tmRNA is encoded by the ssrA gene; the 2 termini fold to resemble tRNA(Ala) and it encodes a 'tag peptide', a short internal open reading frame. During trans-translation Ala-aminoacylated tmRNA acts like a tRNA, entering the A-site of stalled ribosomes, displacing the stalled mRNA. The ribosome then switches to translate the ORF on the tmRNA; the nascent peptide is terminated with the 'tag peptide' encoded by the tmRNA and targeted for degradation. The ribosome is freed to recommence translation, which seems to be the essential function of trans-translation. The chain is SsrA-binding protein from Sinorhizobium fredii (strain NBRC 101917 / NGR234).